Here is a 187-residue protein sequence, read N- to C-terminus: Elongation factor P (187 aa).

Belongs to the elongation factor P family.

The protein resides in the cytoplasm. It participates in protein biosynthesis; polypeptide chain elongation. Involved in peptide bond synthesis. Stimulates efficient translation and peptide-bond synthesis on native or reconstituted 70S ribosomes in vitro. Probably functions indirectly by altering the affinity of the ribosome for aminoacyl-tRNA, thus increasing their reactivity as acceptors for peptidyl transferase. This Corynebacterium kroppenstedtii (strain DSM 44385 / JCM 11950 / CIP 105744 / CCUG 35717) protein is Elongation factor P.